Reading from the N-terminus, the 283-residue chain is Bifunctional protein FolD (283 aa).

NADP(+) contacts are provided by residues 165-167 (GAS) and Ser-190.

The protein belongs to the tetrahydrofolate dehydrogenase/cyclohydrolase family. Homodimer.

The catalysed reaction is (6R)-5,10-methylene-5,6,7,8-tetrahydrofolate + NADP(+) = (6R)-5,10-methenyltetrahydrofolate + NADPH. It carries out the reaction (6R)-5,10-methenyltetrahydrofolate + H2O = (6R)-10-formyltetrahydrofolate + H(+). It functions in the pathway one-carbon metabolism; tetrahydrofolate interconversion. Catalyzes the oxidation of 5,10-methylenetetrahydrofolate to 5,10-methenyltetrahydrofolate and then the hydrolysis of 5,10-methenyltetrahydrofolate to 10-formyltetrahydrofolate. This chain is Bifunctional protein FolD, found in Cupriavidus taiwanensis (strain DSM 17343 / BCRC 17206 / CCUG 44338 / CIP 107171 / LMG 19424 / R1) (Ralstonia taiwanensis (strain LMG 19424)).